Here is a 73-residue protein sequence, read N- to C-terminus: Probable minor pilin MMP0528 (73 aa).

A propeptide spanning residues 1–10 (MLKKLYSKKG) is cleaved from the precursor. The short motif at 11–19 (QVSMEMGIL) is the QXSXEXXXL element.

The N-terminus is probably cleaved by the prepilin peptidase EppA, which recognizes the class III signal sequence.

Its subcellular location is the secreted. The protein localises to the cell surface. The protein resides in the fimbrium. The sequence is that of Probable minor pilin MMP0528 from Methanococcus maripaludis (strain DSM 14266 / JCM 13030 / NBRC 101832 / S2 / LL).